Consider the following 213-residue polypeptide: ATP phosphoribosyltransferase (213 aa).

Belongs to the ATP phosphoribosyltransferase family. Short subfamily. As to quaternary structure, heteromultimer composed of HisG and HisZ subunits.

The protein resides in the cytoplasm. It catalyses the reaction 1-(5-phospho-beta-D-ribosyl)-ATP + diphosphate = 5-phospho-alpha-D-ribose 1-diphosphate + ATP. It functions in the pathway amino-acid biosynthesis; L-histidine biosynthesis; L-histidine from 5-phospho-alpha-D-ribose 1-diphosphate: step 1/9. In terms of biological role, catalyzes the condensation of ATP and 5-phosphoribose 1-diphosphate to form N'-(5'-phosphoribosyl)-ATP (PR-ATP). Has a crucial role in the pathway because the rate of histidine biosynthesis seems to be controlled primarily by regulation of HisG enzymatic activity. This Thermoanaerobacter pseudethanolicus (strain ATCC 33223 / 39E) (Clostridium thermohydrosulfuricum) protein is ATP phosphoribosyltransferase.